Consider the following 508-residue polypeptide: Ankyrin repeat domain-containing protein 34B (508 aa).

4 ANK repeats span residues 9–38 (TDGN…YINE), 42–79 (RGET…DPNI), 83–113 (SGKS…DLSL), and 117–146 (SGYS…AKGK). Positions 157–185 (PSGRHTTQHHLNMPPADMDGSHPPATPSE) are disordered. Ser260 carries the post-translational modification Phosphoserine. Thr269 carries the post-translational modification Phosphothreonine. Ser293 carries the phosphoserine modification. Positions 361-370 (GANHYSSDSQ) are enriched in polar residues. The tract at residues 361–380 (GANHYSSDSQLAEGVTPPTV) is disordered.

Belongs to the ANKRD34 family. In terms of processing, phosphorylated. In terms of tissue distribution, specifically and constitutively expressed in brain (at protein level).

It is found in the cytoplasm. Its subcellular location is the nucleus. The sequence is that of Ankyrin repeat domain-containing protein 34B (Ankrd34b) from Mus musculus (Mouse).